A 296-amino-acid polypeptide reads, in one-letter code: Homoserine kinase (296 aa).

An ATP-binding site is contributed by Pro-85 to Ala-95.

Belongs to the GHMP kinase family. Homoserine kinase subfamily.

It is found in the cytoplasm. The enzyme catalyses L-homoserine + ATP = O-phospho-L-homoserine + ADP + H(+). It participates in amino-acid biosynthesis; L-threonine biosynthesis; L-threonine from L-aspartate: step 4/5. Catalyzes the ATP-dependent phosphorylation of L-homoserine to L-homoserine phosphate. The polypeptide is Homoserine kinase (Moorella thermoacetica (strain ATCC 39073 / JCM 9320)).